Reading from the N-terminus, the 954-residue chain is Glycine dehydrogenase (decarboxylating) (954 aa).

Position 706 is an N6-(pyridoxal phosphate)lysine (Lys706).

It belongs to the GcvP family. The glycine cleavage system is composed of four proteins: P, T, L and H. Requires pyridoxal 5'-phosphate as cofactor.

The enzyme catalyses N(6)-[(R)-lipoyl]-L-lysyl-[glycine-cleavage complex H protein] + glycine + H(+) = N(6)-[(R)-S(8)-aminomethyldihydrolipoyl]-L-lysyl-[glycine-cleavage complex H protein] + CO2. In terms of biological role, the glycine cleavage system catalyzes the degradation of glycine. The P protein binds the alpha-amino group of glycine through its pyridoxal phosphate cofactor; CO(2) is released and the remaining methylamine moiety is then transferred to the lipoamide cofactor of the H protein. This Pseudomonas savastanoi pv. phaseolicola (strain 1448A / Race 6) (Pseudomonas syringae pv. phaseolicola (strain 1448A / Race 6)) protein is Glycine dehydrogenase (decarboxylating).